Reading from the N-terminus, the 338-residue chain is Cinnamoyl-CoA reductase 1 (338 aa).

Residues 22–28, Arg-47, Lys-53, 73–74, 93–95, Tyr-165, Lys-169, 192–195, and Ser-207 contribute to the NADP(+) site; these read GAGGFIG, DV, VAS, and PSMT. Residues Cys-158 and Cys-166 are joined by a disulfide bond. Residue Lys-169 is the Proton donor of the active site.

The protein belongs to the NAD(P)-dependent epimerase/dehydratase family. Dihydroflavonol-4-reductase subfamily. As to quaternary structure, interacts with RAC1 in a GTP-dependent manner.

Its subcellular location is the cytoplasm. The enzyme catalyses (E)-cinnamaldehyde + NADP(+) + CoA = (E)-cinnamoyl-CoA + NADPH + H(+). Its pathway is aromatic compound metabolism; phenylpropanoid biosynthesis. Its activity is regulated as follows. Activated by the small GTPase RAC1. Functionally, involved in the latter stages of lignin biosynthesis. Catalyzes one of the last steps of monolignol biosynthesis, the conversion of cinnamoyl-CoAs into their corresponding cinnamaldehydes. Probably involved in the formation of lignin in defense responses. The chain is Cinnamoyl-CoA reductase 1 from Oryza sativa subsp. japonica (Rice).